A 126-amino-acid chain; its full sequence is MAGSAPEALLVGLGAIPGAWLRLKVVNHFEPMVPKKHWGTLLVNVISSFALGLVLALDETCSASSGIALLMGVGFFGTLSTFSTFVVELLNELRAGHLLAAAALAVISIVAGLIAAAAGYGLGAYG.

3 helical membrane passes run His-37–Leu-57, Ile-67–Val-87, and Leu-98–Ala-118. Na(+) is bound by residues Gly-77 and Ser-80.

This sequence belongs to the fluoride channel Fluc/FEX (TC 1.A.43) family.

It is found in the cell inner membrane. It catalyses the reaction fluoride(in) = fluoride(out). Na(+) is not transported, but it plays an essential structural role and its presence is essential for fluoride channel function. In terms of biological role, fluoride-specific ion channel. Important for reducing fluoride concentration in the cell, thus reducing its toxicity. This Parasynechococcus marenigrum (strain WH8102) protein is Fluoride-specific ion channel FluC 1.